Reading from the N-terminus, the 822-residue chain is Cation/H(+) antiporter 3 (822 aa).

12 helical membrane-spanning segments follow: residues 55-75 (FPHL…LHFF), 116-136 (EIVF…LMGV), 150-170 (AITI…VIFF), 190-210 (YVVI…NLLF), 224-244 (ISSA…LIFM), 274-294 (IVVL…FYII), 305-325 (AIYL…ANWC), 331-351 (MGPF…SAII), 362-382 (FLPF…LFGW), 388-408 (IILI…VPAL), 418-438 (FALS…YALA), and 447-467 (ETFT…PPIL).

The protein belongs to the monovalent cation:proton antiporter 2 (CPA2) transporter (TC 2.A.37) family. CHX (TC 2.A.37.4) subfamily.

It is found in the membrane. Its function is as follows. May operate as a cation/H(+) antiporter. This Arabidopsis thaliana (Mouse-ear cress) protein is Cation/H(+) antiporter 3 (CHX3).